The sequence spans 1902 residues: PII-type proteinase (1902 aa).

The signal sequence occupies residues 1–33 (MQRKKKGLSILLAGTVALGALAVLPVGEIQAKA). Residues 34–187 (AISQQTKVSS…VTLAKVYYPT (154 aa)) constitute a propeptide that is removed on maturation. The 507-residue stretch at 191–697 (ANSMANVQAV…AGLVDVKAAI (507 aa)) folds into the Peptidase S8 domain. Active-site charge relay system residues include Asp217, His281, and Ser620. The segment covering 1793-1805 (KTAGKGDDTTGTS) has biased composition (low complexity). The tract at residues 1793-1872 (KTAGKGDDTT…GKGALPKTAE (80 aa)) is disordered. The LPXTG sorting signal motif lies at 1867–1871 (LPKTA). Residue Thr1870 is modified to Pentaglycyl murein peptidoglycan amidated threonine. The propeptide at 1871–1902 (AETTERPAFGFLGVIVVSLMGVLGLKRKQREE) is removed by sortase.

It belongs to the peptidase S8 family.

The protein localises to the secreted. It localises to the cell wall. The enzyme catalyses Endopeptidase activity with very broad specificity, although some subsite preference have been noted, e.g. large hydrophobic residues in the P1 and P4 positions, and Pro in the P2 position. Best known for its action on caseins, although it has been shown to hydrolyze hemoglobin and oxidized insulin B-chain.. Functionally, protease which breaks down milk proteins during the growth of the bacteria on milk. The protein is PII-type proteinase (prtP) of Lacticaseibacillus paracasei (Lactobacillus paracasei).